Consider the following 185-residue polypeptide: Elongation factor P (185 aa).

This sequence belongs to the elongation factor P family.

It is found in the cytoplasm. The protein operates within protein biosynthesis; polypeptide chain elongation. Functionally, involved in peptide bond synthesis. Stimulates efficient translation and peptide-bond synthesis on native or reconstituted 70S ribosomes in vitro. Probably functions indirectly by altering the affinity of the ribosome for aminoacyl-tRNA, thus increasing their reactivity as acceptors for peptidyl transferase. The chain is Elongation factor P from Deinococcus radiodurans (strain ATCC 13939 / DSM 20539 / JCM 16871 / CCUG 27074 / LMG 4051 / NBRC 15346 / NCIMB 9279 / VKM B-1422 / R1).